The chain runs to 565 residues: Ubiquitin carboxyl-terminal hydrolase 21 (565 aa).

The span at 1 to 14 (MPQASEHRLGRTRE) shows a compositional bias: basic and acidic residues. Disordered regions lie at residues 1–103 (MPQA…LPLP), 109–128 (ARSKSVSSGDLRPMGIALGG), and 142–163 (LALRPEPPPLRRSTSLRRLGGF). The segment covering 42–57 (APGPNPMLRPLPPRPG) has biased composition (pro residues). Residues 58–70 (PPEERLKKLELGR) are compositionally biased toward basic and acidic residues. Residues 71 to 82 (GRTSGPRPSGPL) are compositionally biased toward low complexity. Residues 134 to 152 (ELGAALSRLALRPEPPPLR) carry the Nuclear export signal motif. One can recognise a USP domain in the interval 212-558 (VGLRNLGNTC…EGYVLFYQLM (347 aa)). Catalysis depends on Cys-221, which acts as the Nucleophile. Zn(2+) is bound by residues Cys-384, Cys-387, Cys-437, and Cys-440. The active-site Proton acceptor is the His-518.

Belongs to the peptidase C19 family. USP21 subfamily. Interacts with BEND3.

It is found in the cytoplasm. Its subcellular location is the nucleus. The enzyme catalyses Thiol-dependent hydrolysis of ester, thioester, amide, peptide and isopeptide bonds formed by the C-terminal Gly of ubiquitin (a 76-residue protein attached to proteins as an intracellular targeting signal).. In terms of biological role, deubiquitinating enzyme that hydrolyzes 'Lys-6'- and 'Lys-11'-linked polyubiquitin. Also hydrolyzes heterotypic (mixed and branched) and homotypic chains. Important regulator of energy metabolism. Glucose and fatty acids trigger its nuclear translocation by CBP-dependent acetylation. In the nucleus, deubiquitinates and stabilizes the nuclear receptor PPARD regulating the expression of various genes involved in glucose and lipid metabolism and oxidative phosphorylation. Also acts as a negative regulator of the ribosome quality control (RQC) by mediating deubiquitination of 40S ribosomal proteins RPS10/eS10 and RPS20/uS10, thereby antagonizing ZNF598-mediated 40S ubiquitination. The sequence is that of Ubiquitin carboxyl-terminal hydrolase 21 (USP21) from Bos taurus (Bovine).